We begin with the raw amino-acid sequence, 364 residues long: Beta-parvin (364 aa).

Residues 1 to 57 form a disordered region; the sequence is MSSAPRSPTPRPRRMKKDESFLGKLGGTLARKRRAREVSDLQEEGKNAINSPMSPAL. Serine 7 is modified (phosphoserine). Over residues 36–46 the composition is skewed to basic and acidic residues; it reads REVSDLQEEGK. Residue serine 54 is modified to Phosphoserine. Calponin-homology (CH) domains follow at residues 87-194 and 254-361; these read KELV…MHFR and SVVK…TKYK.

It belongs to the parvin family. As to quaternary structure, interacts with DYSF. Interacts with ILK, ARHGEF6, PXN (via LD motifs), ACTN2 and actin. Expressed predominantly in heart and skeletal muscle.

The protein localises to the cell junction. The protein resides in the focal adhesion. It localises to the cell membrane. Its subcellular location is the cytoplasm. It is found in the cytoskeleton. The protein localises to the cell projection. The protein resides in the lamellipodium. It localises to the myofibril. Its subcellular location is the sarcomere. It is found in the z line. In terms of biological role, adapter protein that plays a role in integrin signaling via ILK and in activation of the GTPases CDC42 and RAC1 by guanine exchange factors, such as ARHGEF6. Is involved in the reorganization of the actin cytoskeleton and formation of lamellipodia. Plays a role in cell adhesion, cell spreading, establishment or maintenance of cell polarity, and cell migration. This is Beta-parvin (PARVB) from Homo sapiens (Human).